A 631-amino-acid polypeptide reads, in one-letter code: DNA mismatch repair protein MutL (631 aa).

Residues 389-423 (GEREASRQAGGQRVQETQMSSYGSGQSGGRGRSYA) form a disordered region.

Belongs to the DNA mismatch repair MutL/HexB family.

Functionally, this protein is involved in the repair of mismatches in DNA. It is required for dam-dependent methyl-directed DNA mismatch repair. May act as a 'molecular matchmaker', a protein that promotes the formation of a stable complex between two or more DNA-binding proteins in an ATP-dependent manner without itself being part of a final effector complex. The chain is DNA mismatch repair protein MutL from Shewanella loihica (strain ATCC BAA-1088 / PV-4).